We begin with the raw amino-acid sequence, 395 residues long: Phosphatidylinositol 4-phosphate 5-kinase-like protein 1 (395 aa).

The tract at residues 1-25 is disordered; the sequence is MATPSLRSHEIPAHSQEAGNKSISS. One can recognise a PIPK domain in the interval 37–394; it reads ARQSRVGLFE…RLCRWAEVHT (358 aa).

Interacts with type I phosphatidylinositol 4-phosphate 5-kinases, including PIP5K1A and PIP5K1B. In terms of tissue distribution, highly expressed in brain and testis, relatively to heart, spleen, lung, liver, skeletal muscle and kidney.

The protein localises to the cytoplasm. It localises to the membrane. May act as a scaffold to localize and regulate type I phosphatidylinositol 4-phosphate 5-kinases to specific compartments within the cell, where they generate PI(4,5)P2 for actin nucleation, signaling and scaffold protein recruitment and conversion to PI(3,4,5)P3. The chain is Phosphatidylinositol 4-phosphate 5-kinase-like protein 1 (Pip5kl1) from Mus musculus (Mouse).